Consider the following 458-residue polypeptide: Retinoic acid receptor alpha-B (458 aa).

The tract at residues 1–79 (MYESVDVVGL…PPSPPPPPRV (79 aa)) is modulating. Residues 48–75 (HWSGSNHSVETQSTSSEEIVPSPPSPPP) form a disordered region. Residues 49–64 (WSGSNHSVETQSTSSE) show a composition bias toward polar residues. The segment at residues 80-155 (YKPCFVCQDK…VGMSKESVRN (76 aa)) is a DNA-binding region (nuclear receptor). NR C4-type zinc fingers lie at residues 83–103 (CFVC…CEGC) and 119–138 (CHRE…CQYC). The segment at 156-177 (DRNKRKKDDKKQECLENYVLSP) is hinge. In terms of domain architecture, NR LBD spans 178–412 (DTEKMIEQVR…PLIQEMLENS (235 aa)). A 9aaTAD motif is present at residues 403-411 (PLIQEMLEN). Residues 411–458 (NSEGLEGGGSKGAGGGGGGGGGKGAPPGSCSPSLSPSSAHSSPSAHSP) are disordered. Gly residues predominate over residues 415–435 (LEGGGSKGAGGGGGGGGGKGA). Residues 436-458 (PPGSCSPSLSPSSAHSSPSAHSP) are compositionally biased toward low complexity.

This sequence belongs to the nuclear hormone receptor family. NR1 subfamily. In terms of assembly, heterodimer; with an rxr molecule. Binds DNA preferentially as a rar/rxr heterodimer. As to expression, in the embryo, zygotic expression largely overlaps that of raraa, with high levels in hindbrain, lateral plate mesoderm (LPM) and tail bud, but in later stages rarab is expressed more broadly in the brain, pectoral fin bud and pharyngeal arches.

The protein resides in the nucleus. Its function is as follows. Receptor for retinoic acid. Retinoic acid receptors bind as heterodimers to their target response elements in response to their ligands, all-trans or 9-cis retinoic acid, and regulate gene expression in various biological processes. The rar/rxr heterodimers bind to the retinoic acid response elements (RARE) composed of tandem 5'-AGGTCA-3' sites known as DR1-DR5. Required for hindbrain development and, in lateral plate mesoderm, for specification of the pectoral fins. This chain is Retinoic acid receptor alpha-B, found in Danio rerio (Zebrafish).